A 438-amino-acid chain; its full sequence is Xylose isomerase (438 aa).

Catalysis depends on residues His-103 and Asp-106. Residues Glu-234, Glu-270, His-273, Asp-298, Asp-309, Asp-311, and Asp-341 each contribute to the Mg(2+) site.

Belongs to the xylose isomerase family. In terms of assembly, homotetramer. The cofactor is Mg(2+).

The protein localises to the cytoplasm. The enzyme catalyses alpha-D-xylose = alpha-D-xylulofuranose. This chain is Xylose isomerase, found in Bacteroides thetaiotaomicron (strain ATCC 29148 / DSM 2079 / JCM 5827 / CCUG 10774 / NCTC 10582 / VPI-5482 / E50).